An 88-amino-acid polypeptide reads, in one-letter code: MATSPQTDPQHDDRPLPQDFETALAELETLVAAMEDGSLPLEQSLAAYRRGVELTRVCQERLAQAEQQVKVLEDGLLRPLDPRALDDE.

Belongs to the XseB family. In terms of assembly, heterooligomer composed of large and small subunits.

It localises to the cytoplasm. It catalyses the reaction Exonucleolytic cleavage in either 5'- to 3'- or 3'- to 5'-direction to yield nucleoside 5'-phosphates.. In terms of biological role, bidirectionally degrades single-stranded DNA into large acid-insoluble oligonucleotides, which are then degraded further into small acid-soluble oligonucleotides. This is Exodeoxyribonuclease 7 small subunit from Bordetella petrii (strain ATCC BAA-461 / DSM 12804 / CCUG 43448).